The primary structure comprises 946 residues: Protein dct-6 (946 aa).

A coiled-coil region spans residues 326–363; the sequence is YMDMNDQIEQMIALLVDQLEELEKLEQLCDEVQKTGNQ.

In terms of biological role, may have a role in tumor suppression. This Caenorhabditis briggsae protein is Protein dct-6.